A 436-amino-acid polypeptide reads, in one-letter code: Serine--tRNA ligase (436 aa).

Residues 43–55 (TKSEQLKQKRNEV) show a composition bias toward basic and acidic residues. Residues 43 to 69 (TKSEQLKQKRNEVSDQIAQAKRNKEDA) are disordered. Position 237–239 (237–239 (TAE)) interacts with L-serine. Position 268–270 (268–270 (RSE)) interacts with ATP. Glu291 is a binding site for L-serine. 355–358 (EISS) contacts ATP. Position 390 (Ser390) interacts with L-serine.

Belongs to the class-II aminoacyl-tRNA synthetase family. Type-1 seryl-tRNA synthetase subfamily. Homodimer. The tRNA molecule binds across the dimer.

It localises to the cytoplasm. It catalyses the reaction tRNA(Ser) + L-serine + ATP = L-seryl-tRNA(Ser) + AMP + diphosphate + H(+). The enzyme catalyses tRNA(Sec) + L-serine + ATP = L-seryl-tRNA(Sec) + AMP + diphosphate + H(+). The protein operates within aminoacyl-tRNA biosynthesis; selenocysteinyl-tRNA(Sec) biosynthesis; L-seryl-tRNA(Sec) from L-serine and tRNA(Sec): step 1/1. Functionally, catalyzes the attachment of serine to tRNA(Ser). Is also able to aminoacylate tRNA(Sec) with serine, to form the misacylated tRNA L-seryl-tRNA(Sec), which will be further converted into selenocysteinyl-tRNA(Sec). The protein is Serine--tRNA ligase of Lactobacillus gasseri (strain ATCC 33323 / DSM 20243 / BCRC 14619 / CIP 102991 / JCM 1131 / KCTC 3163 / NCIMB 11718 / NCTC 13722 / AM63).